Here is a 184-residue protein sequence, read N- to C-terminus: Interferon alpha-2 (184 aa).

An N-terminal signal peptide occupies residues 1 to 23; the sequence is MALPFSLLMALVVLSCHSSCSLG. 2 disulfides stabilise this stretch: cysteine 24-cysteine 122 and cysteine 52-cysteine 162.

It belongs to the alpha/beta interferon family. As to quaternary structure, interacts with IFNAR2.

It localises to the secreted. Functionally, produced by macrophages, IFN-alpha have antiviral activities. The protein is Interferon alpha-2 of Equus caballus (Horse).